A 43-amino-acid polypeptide reads, in one-letter code: Protein PsbN 2 (43 aa).

A helical transmembrane segment spans residues 4 to 24; that stretch reads ATILGISIAAALVGITVLALY.

The protein belongs to the PsbN family.

The protein resides in the cellular thylakoid membrane. May play a role in photosystem I and II biogenesis. In Microcystis aeruginosa (strain NIES-843 / IAM M-2473), this protein is Protein PsbN 2.